We begin with the raw amino-acid sequence, 147 residues long: Small ribosomal subunit protein uS12 (147 aa).

The protein belongs to the universal ribosomal protein uS12 family. In terms of assembly, part of the 30S ribosomal subunit.

With S4 and S5 plays an important role in translational accuracy. Located at the interface of the 30S and 50S subunits. The protein is Small ribosomal subunit protein uS12 of Pyrobaculum islandicum (strain DSM 4184 / JCM 9189 / GEO3).